The sequence spans 278 residues: Para-Rep C1 (278 aa).

In terms of domain architecture, CRESS-DNA virus Rep endonuclease spans 1–95; it reads MACSNWVFTR…VAGPWSYGDL (95 aa). The short motif at 8-11 is the RCR-1 element; it reads FTRN. A divalent metal cation contacts are provided by E33 and H39. The RCR-2 signature appears at 39–41; sequence HIQ. The Nuclear localization signal motif lies at 48–69; that stretch reads KKARFSTVKEIIGGNPHVEKMK. Y78 functions as the For DNA cleavage activity in the catalytic mechanism. Residues 78-81 carry the RCR-3 motif; it reads YVQK. A divalent metal cation is bound at residue E83. The Nuclear localization signal motif lies at 95–101; that stretch reads LLKRGSH. 176–178 contacts ATP; the sequence is GKS.

Belongs to the nanoviridea/circoviridae replication-associated protein family. Homooligomer (Potential). Rep binds to repeated DNA motifs (iterons). It depends on Mg(2+) as a cofactor. The cofactor is Mn(2+).

The protein resides in the host nucleus. It catalyses the reaction ATP + H2O = ADP + phosphate + H(+). Functionally, initiates and terminates the replication only of its own subviral DNA molecule. The closed circular ssDNA genome is first converted to a superhelical dsDNA. Rep binds a specific hairpin at the genome origin of replication. Introduces an endonucleolytic nick within the intergenic region of the genome, thereby initiating the rolling circle replication (RCR). Following cleavage, binds covalently to the 5'-phosphate of DNA as a tyrosyl ester. The cleavage gives rise to a free 3'-OH that serves as a primer for the cellular DNA polymerase. The polymerase synthesizes the (+) strand DNA by rolling circle mechanism. After one round of replication, a Rep-catalyzed nucleotidyl transfer reaction releases a circular single-stranded virus genome, thereby terminating the replication. Displays origin-specific DNA cleavage, nucleotidyl transferase, ATPase and helicase activities. This is Para-Rep C1 (C1) from Faba bean necrotic yellows C1 alphasatellite (FBNYC1A).